Reading from the N-terminus, the 323-residue chain is Acetyl esterase (323 aa).

The short motif at 91-93 is the Involved in the stabilization of the negatively charged intermediate by the formation of the oxyanion hole element; it reads HGG. Catalysis depends on residues Ser-165, Asp-262, and His-292.

This sequence belongs to the 'GDXG' lipolytic enzyme family. In terms of assembly, homodimer. Interacts with MalT and MelA.

The protein resides in the cytoplasm. Displays esterase activity towards short chain fatty esters (acyl chain length of up to 8 carbons). Able to hydrolyze triacetylglycerol (triacetin) and tributyrylglycerol (tributyrin), but not trioleylglycerol (triolein) or cholesterol oleate. Negatively regulates MalT activity by antagonizing maltotriose binding. Inhibits MelA galactosidase activity. This is Acetyl esterase from Salmonella choleraesuis (strain SC-B67).